Reading from the N-terminus, the 465-residue chain is Ribulose bisphosphate carboxylase large chain (465 aa).

An N6,N6,N6-trimethyllysine modification is found at lysine 4. Asparagine 113 and threonine 163 together coordinate substrate. Lysine 165 serves as the catalytic Proton acceptor. Lysine 167 is a substrate binding site. Mg(2+) contacts are provided by lysine 191, aspartate 193, and glutamate 194. An N6-carboxylysine modification is found at lysine 191. The active-site Proton acceptor is the histidine 284. Residues arginine 285, histidine 317, and serine 369 each contribute to the substrate site.

Belongs to the RuBisCO large chain family. Type I subfamily. In terms of assembly, heterohexadecamer of 8 large chains and 8 small chains; disulfide-linked. The disulfide link is formed within the large subunit homodimers. Requires Mg(2+) as cofactor. In terms of processing, the disulfide bond which can form in the large chain dimeric partners within the hexadecamer appears to be associated with oxidative stress and protein turnover.

It is found in the plastid. Its subcellular location is the chloroplast. The enzyme catalyses 2 (2R)-3-phosphoglycerate + 2 H(+) = D-ribulose 1,5-bisphosphate + CO2 + H2O. It carries out the reaction D-ribulose 1,5-bisphosphate + O2 = 2-phosphoglycolate + (2R)-3-phosphoglycerate + 2 H(+). Functionally, ruBisCO catalyzes two reactions: the carboxylation of D-ribulose 1,5-bisphosphate, the primary event in carbon dioxide fixation, as well as the oxidative fragmentation of the pentose substrate in the photorespiration process. Both reactions occur simultaneously and in competition at the same active site. The polypeptide is Ribulose bisphosphate carboxylase large chain (Manilkara zapota (Sapodilla plum)).